Consider the following 429-residue polypeptide: Glutamate-1-semialdehyde 2,1-aminomutase (429 aa).

N6-(pyridoxal phosphate)lysine is present on Lys-267.

This sequence belongs to the class-III pyridoxal-phosphate-dependent aminotransferase family. HemL subfamily. Homodimer. Requires pyridoxal 5'-phosphate as cofactor.

It localises to the cytoplasm. It catalyses the reaction (S)-4-amino-5-oxopentanoate = 5-aminolevulinate. It participates in porphyrin-containing compound metabolism; protoporphyrin-IX biosynthesis; 5-aminolevulinate from L-glutamyl-tRNA(Glu): step 2/2. The sequence is that of Glutamate-1-semialdehyde 2,1-aminomutase from Anaeromyxobacter sp. (strain Fw109-5).